The primary structure comprises 481 residues: Proline--tRNA ligase (481 aa).

This sequence belongs to the class-II aminoacyl-tRNA synthetase family. ProS type 3 subfamily. Homodimer.

The protein resides in the cytoplasm. It catalyses the reaction tRNA(Pro) + L-proline + ATP = L-prolyl-tRNA(Pro) + AMP + diphosphate. Its function is as follows. Catalyzes the attachment of proline to tRNA(Pro) in a two-step reaction: proline is first activated by ATP to form Pro-AMP and then transferred to the acceptor end of tRNA(Pro). This chain is Proline--tRNA ligase, found in Chlorobium limicola (strain DSM 245 / NBRC 103803 / 6330).